The sequence spans 190 residues: Ribonuclease HII (190 aa).

The region spanning 1-190 (MAGVDEVGRG…FCRKIIENPD (190 aa)) is the RNase H type-2 domain. The a divalent metal cation site is built by D5, E6, and D101.

It belongs to the RNase HII family. Requires Mn(2+) as cofactor. Mg(2+) is required as a cofactor.

The protein localises to the cytoplasm. It carries out the reaction Endonucleolytic cleavage to 5'-phosphomonoester.. Endonuclease that specifically degrades the RNA of RNA-DNA hybrids. This chain is Ribonuclease HII (rnhB), found in Synechocystis sp. (strain ATCC 27184 / PCC 6803 / Kazusa).